A 121-amino-acid chain; its full sequence is uncharacterized protein (121 aa).

The interval N20–T98 is disordered. Over residues K35–N51 the composition is skewed to basic and acidic residues.

This is an uncharacterized protein from Invertebrate iridescent virus 6 (IIV-6).